A 155-amino-acid polypeptide reads, in one-letter code: uncharacterized protein (155 aa).

Disordered regions lie at residues 24–63 and 80–155; these read RVGY…VVLK and KAAK…DENE. The span at 43–56 shows a compositional bias: acidic residues; sequence PDEDGNESDKEDEQ. Ser50 is modified (phosphoserine). Lys108 is modified (N6-acetyllysine). Positions 128–147 are enriched in polar residues; the sequence is KQSPVRKNSQKQIKNSSLLS. A phosphoserine mark is found at Ser130, Ser147, and Ser150.

This is an uncharacterized protein from Rattus norvegicus (Rat).